The primary structure comprises 528 residues: Glucose transporter 1E (528 aa).

Residues 1–22 (MTERRDNVSHAPDAIEGPNDGA) form a disordered region. Residues 1–43 (MTERRDNVSHAPDAIEGPNDGAHAEETSPGFFSFENLGVAQVQ) lie on the Cytoplasmic side of the membrane. A helical membrane pass occupies residues 44–64 (VVGGTLNGYVIGYVAVYLLLY). The Extracellular portion of the chain corresponds to 65 to 118 (LTATECKFTTEGACGGRKIYGCKWSGTTCKFENPKCSEGSDPSDSCKNEVAYTS). Residues 119–139 (VYSGIFACAMIVGSMVGSIIA) traverse the membrane as a helical segment. Residues 140–151 (GKCITTFGLKKS) lie on the Cytoplasmic side of the membrane. A helical membrane pass occupies residues 152–172 (FIIVSITCTIACVVVQVAIEY). At 173–175 (NNY) the chain is on the extracellular side. A helical membrane pass occupies residues 176-196 (YALCTGRVLIGLGVGILCSVF). At 197-213 (PMYVNENAHPKLCKMDG) the chain is on the cytoplasmic side. A helical membrane pass occupies residues 214 to 234 (VLFQVFTTLGIMLAAMLGLIL). The Extracellular segment spans residues 235–250 (DKTGASKEEANMAGRL). Residues 251–271 (HVFSAVPLGLSVAMFLVGMFL) traverse the membrane as a helical segment. Topologically, residues 272–301 (RESTATFAQDDDGKADGGMDPNEYGWGQML) are cytoplasmic. The chain crosses the membrane as a helical span at residues 302–322 (WPLFMGAVTAGTLQLTGINAV). Residues 323-338 (MNYAPKITENLGMDPS) are Extracellular-facing. The chain crosses the membrane as a helical span at residues 339–359 (LGNFLVMAWNFVTSLVAIPLA). Topologically, residues 360–367 (SRFTMRQM) are cytoplasmic. The chain crosses the membrane as a helical span at residues 368 to 388 (FITCSFVASCMCLFLCGIPVF). Residues 389–403 (PGVAEEKVKNGVATT) lie on the Extracellular side of the membrane. A helical membrane pass occupies residues 404 to 424 (GIALFIAAFEFGVGSCFFVLA). Topologically, residues 425–438 (QDLFPPSFRPKGSS) are cytoplasmic. A helical transmembrane segment spans residues 439–459 (FVVMMQFIFNILINLLYPITT). Over 460-475 (EAISGGATGDQDKGQA) the chain is Extracellular. A helical membrane pass occupies residues 476–496 (VVFILFGLIGLICFVLQFFYL). At 497 to 528 (YPYDANQDHENDHGTEPVERILSPVDVPTPRN) the chain is on the cytoplasmic side. The interval 507-528 (NDHGTEPVERILSPVDVPTPRN) is disordered.

It belongs to the major facilitator superfamily. Sugar transporter (TC 2.A.1.1) family.

It localises to the membrane. In terms of biological role, facilitative glucose transporter. This chain is Glucose transporter 1E (THT1E), found in Trypanosoma brucei brucei.